The chain runs to 61 residues: Temporin-CG3 (61 aa).

The first 22 residues, M1–C22, serve as a signal peptide directing secretion. The propeptide at E23–E44 is removed in mature form.

This sequence belongs to the frog skin active peptide (FSAP) family. Temporin subfamily. In terms of tissue distribution, expressed by the skin glands.

The protein localises to the secreted. Antimicrobial peptide active against a variety of Gram-positive bacterial strains but not against Gram-negative bacteria. Has weak antifungal activity against a slime mold isolate. Has weak hemolytic activity against human erythrocytes. This is Temporin-CG3 from Amolops chunganensis (Chungan torrent frog).